We begin with the raw amino-acid sequence, 87 residues long: Phytosulfokines 2 (87 aa).

A signal peptide spans 1–22 (MANVSALLTIALLLCSTLMCTA). The propeptide occupies 23-77 (RPEPAISISITTAADPCNMEKKIEGKLDDMHMVDENCGADDEDCLMRRTLVAHTD). 2 positions are modified to sulfotyrosine: Tyr78 and Tyr80. A propeptide spanning residues 83–87 (KKKHP) is cleaved from the precursor.

This sequence belongs to the phytosulfokine family. Post-translationally, sulfation is important for activity and for the binding to a putative membrane receptor. In terms of processing, PSK-beta is an enzymatic derivative of PSK-alpha. In terms of tissue distribution, expressed in stems, roots and leaves.

It is found in the secreted. Promotes plant cell differentiation, organogenesis and somatic embryogenesis as well as cell proliferation. The polypeptide is Phytosulfokines 2 (PSK2) (Arabidopsis thaliana (Mouse-ear cress)).